The following is a 244-amino-acid chain: Type III pantothenate kinase (244 aa).

6 to 13 (DVGNTRIK) is an ATP binding site. Residues Tyr87 and 94–97 (GIDR) contribute to the substrate site. The Proton acceptor role is filled by Asp96. K(+) is bound at residue Asp117. Position 120 (Thr120) interacts with ATP. Thr172 is a binding site for substrate.

Belongs to the type III pantothenate kinase family. Homodimer. NH4(+) is required as a cofactor. K(+) serves as cofactor.

Its subcellular location is the cytoplasm. It catalyses the reaction (R)-pantothenate + ATP = (R)-4'-phosphopantothenate + ADP + H(+). It functions in the pathway cofactor biosynthesis; coenzyme A biosynthesis; CoA from (R)-pantothenate: step 1/5. Its function is as follows. Catalyzes the phosphorylation of pantothenate (Pan), the first step in CoA biosynthesis. This is Type III pantothenate kinase from Flavobacterium johnsoniae (strain ATCC 17061 / DSM 2064 / JCM 8514 / BCRC 14874 / CCUG 350202 / NBRC 14942 / NCIMB 11054 / UW101) (Cytophaga johnsonae).